The following is a 1240-amino-acid chain: DNA polymerase II large subunit (1240 aa).

It belongs to the archaeal DNA polymerase II family. In terms of assembly, heterodimer of a large subunit and a small subunit.

The catalysed reaction is DNA(n) + a 2'-deoxyribonucleoside 5'-triphosphate = DNA(n+1) + diphosphate. It carries out the reaction Exonucleolytic cleavage in the 3'- to 5'-direction to yield nucleoside 5'-phosphates.. Possesses two activities: a DNA synthesis (polymerase) and an exonucleolytic activity that degrades single-stranded DNA in the 3'- to 5'-direction. Has a template-primer preference which is characteristic of a replicative DNA polymerase. The sequence is that of DNA polymerase II large subunit from Methanopyrus kandleri (strain AV19 / DSM 6324 / JCM 9639 / NBRC 100938).